Reading from the N-terminus, the 903-residue chain is Cell division cycle protein 48 homolog MJ1156 (903 aa).

Residues 220 to 227 and 493 to 500 contribute to the ATP site; these read GPPGTGKT.

The protein belongs to the AAA ATPase family. CDC48 subfamily.

This chain is Cell division cycle protein 48 homolog MJ1156, found in Methanocaldococcus jannaschii (strain ATCC 43067 / DSM 2661 / JAL-1 / JCM 10045 / NBRC 100440) (Methanococcus jannaschii).